A 466-amino-acid polypeptide reads, in one-letter code: Asparagine--tRNA ligase (466 aa).

Belongs to the class-II aminoacyl-tRNA synthetase family. Homodimer.

It is found in the cytoplasm. It catalyses the reaction tRNA(Asn) + L-asparagine + ATP = L-asparaginyl-tRNA(Asn) + AMP + diphosphate + H(+). This chain is Asparagine--tRNA ligase, found in Shewanella oneidensis (strain ATCC 700550 / JCM 31522 / CIP 106686 / LMG 19005 / NCIMB 14063 / MR-1).